Reading from the N-terminus, the 339-residue chain is Methionyl-tRNA formyltransferase (339 aa).

Residue Ser-110 to Pro-113 participates in (6S)-5,6,7,8-tetrahydrofolate binding.

It belongs to the Fmt family.

It carries out the reaction L-methionyl-tRNA(fMet) + (6R)-10-formyltetrahydrofolate = N-formyl-L-methionyl-tRNA(fMet) + (6S)-5,6,7,8-tetrahydrofolate + H(+). Its function is as follows. Attaches a formyl group to the free amino group of methionyl-tRNA(fMet). The formyl group appears to play a dual role in the initiator identity of N-formylmethionyl-tRNA by promoting its recognition by IF2 and preventing the misappropriation of this tRNA by the elongation apparatus. This is Methionyl-tRNA formyltransferase from Prochlorococcus marinus (strain SARG / CCMP1375 / SS120).